A 173-amino-acid chain; its full sequence is Superoxide dismutase [Cu-Zn] (173 aa).

Residues 1–19 form the signal peptide; sequence MKSLFIASTMVLMAFPAFA. Residues His-67, His-69, and His-92 each contribute to the Cu cation site. Cys-74 and Cys-169 form a disulfide bridge. Residues His-92, His-101, His-109, and Asp-112 each contribute to the Zn(2+) site. A Cu cation-binding site is contributed by His-147.

This sequence belongs to the Cu-Zn superoxide dismutase family. Homodimer. Cu cation serves as cofactor. Requires Zn(2+) as cofactor.

The protein resides in the periplasm. It carries out the reaction 2 superoxide + 2 H(+) = H2O2 + O2. Destroys radicals which are normally produced within the cells and which are toxic to biological systems. This chain is Superoxide dismutase [Cu-Zn] (sodC), found in Brucella abortus biovar 1 (strain 9-941).